The primary structure comprises 567 residues: tRNA(His) guanylyltransferase 1 (567 aa).

D342, G343, and D389 together coordinate Mg(2+). GTP is bound by residues 342–347 (DGCHFH) and 388–389 (SD). Residues K397 and K403 each participate in a glycyl lysine isopeptide (Lys-Gly) (interchain with G-Cter in ubiquitin) cross-link.

Belongs to the tRNA(His) guanylyltransferase family. The cofactor is Mg(2+).

It localises to the nucleus. The protein localises to the nucleoplasm. The catalysed reaction is a 5'-end ribonucleotide-tRNA(His) + GTP + ATP + H2O = a 5'-end phospho-guanosine-ribonucleotide-tRNA(His) + AMP + 2 diphosphate + H(+). In terms of biological role, adds a GMP to the 5'-end of tRNA(His) after transcription and RNase P cleavage. This is tRNA(His) guanylyltransferase 1 (THG1) from Arabidopsis thaliana (Mouse-ear cress).